The chain runs to 446 residues: Serum factor response D (446 aa).

Positions 1–61 (MGRKKIKIQR…PNAKEKYFQY (61 aa)) constitute an MADS-box domain. Disordered stretches follow at residues 95–195 (KKEK…FNSS), 210–296 (TQEN…CQQV), and 319–432 (CSSP…SNLN). Basic and acidic residues predominate over residues 112–121 (SHSEEEDHKS). Residues 133 to 142 (HHNHHHHHHQ) show a composition bias toward basic residues. 2 stretches are compositionally biased toward low complexity: residues 143-195 (YNNN…FNSS) and 216-282 (HYNN…NNNN). Positions 322 to 355 (PEDTSPMTSPRTPPFSSTNTNTLQTSPNSQQKSK) are enriched in polar residues. A compositionally biased stretch (low complexity) spans 365–432 (NNNQNNNNQN…SPTSSSSNLN (68 aa)).

It localises to the nucleus. The sequence is that of Serum factor response D (srfD) from Dictyostelium discoideum (Social amoeba).